The sequence spans 1912 residues: Vitellogenin-1 (1912 aa).

The N-terminal stretch at M1–S15 is a signal peptide. In terms of domain architecture, Vitellogenin spans F24–V663. N163 is a glycosylation site (N-linked (GlcNAc...) asparagine). The disordered stretch occupies residues D948–F972. The N-linked (GlcNAc...) asparagine glycan is linked to N991. Disordered regions lie at residues K1080–I1329 and H1351–N1432. 2 stretches are compositionally biased toward low complexity: residues N1092 to S1124 and S1150 to K1235. An N-linked (GlcNAc...) asparagine glycan is attached at N1206. Residues E1259 to Q1269 are compositionally biased toward basic and acidic residues. Positions S1273–S1299 are enriched in low complexity. A compositionally biased stretch (basic and acidic residues) spans W1306–R1316. Residues S1319–D1328 show a composition bias toward polar residues. The segment covering R1357–S1381 has biased composition (low complexity). N-linked (GlcNAc...) asparagine glycosylation is present at N1375. A compositionally biased stretch (basic residues) spans S1397–R1409. A VWFD domain is found at S1640–S1818. 2 cysteine pairs are disulfide-bonded: C1642-C1781 and C1665-C1817. N-linked (GlcNAc...) asparagine glycans are attached at residues N1662, N1698, and N1703.

Phosvitin, an egg yolk storage protein, is one of the most highly phosphorylated (10%) proteins in nature. In terms of processing, cathepsin D is responsible for intraoocytic processing of vitellogenin. Post-translationally, may contain intrachain disulfide bonds. In terms of tissue distribution, produced by the liver, secreted into the blood and then sequestered by receptor mediated endocytosis into growing oocytes, where it is generally cleaved, giving rise to the respective yolk components.

Its function is as follows. Precursor of the egg-yolk proteins that are sources of nutrients during early development of oviparous organisms. Functionally, phosvitin is believed to be of importance in sequestering calcium, iron and other cations for the developing embryo. In Gallus gallus (Chicken), this protein is Vitellogenin-1 (VTG1).